Consider the following 415-residue polypeptide: Peptide chain release factor subunit 1 (415 aa).

The protein belongs to the eukaryotic release factor 1 family. Heterodimer of two subunits, one of which binds GTP.

The protein resides in the cytoplasm. Its function is as follows. Directs the termination of nascent peptide synthesis (translation) in response to the termination codons UAA, UAG and UGA. The protein is Peptide chain release factor subunit 1 of Methanosarcina mazei (strain ATCC BAA-159 / DSM 3647 / Goe1 / Go1 / JCM 11833 / OCM 88) (Methanosarcina frisia).